The sequence spans 284 residues: tRNA uridine(34) hydroxylase (284 aa).

Residues Asp132–Tyr226 enclose the Rhodanese domain. The Cysteine persulfide intermediate role is filled by Cys186.

The protein belongs to the TrhO family.

It carries out the reaction uridine(34) in tRNA + AH2 + O2 = 5-hydroxyuridine(34) in tRNA + A + H2O. Catalyzes oxygen-dependent 5-hydroxyuridine (ho5U) modification at position 34 in tRNAs. This is tRNA uridine(34) hydroxylase from Burkholderia vietnamiensis (strain G4 / LMG 22486) (Burkholderia cepacia (strain R1808)).